We begin with the raw amino-acid sequence, 146 residues long: Large ribosomal subunit protein uL15 (146 aa).

Residues Met1 to Gly55 form a disordered region. A compositionally biased stretch (gly residues) spans Gly24 to Val37.

Belongs to the universal ribosomal protein uL15 family. Part of the 50S ribosomal subunit.

Its function is as follows. Binds to the 23S rRNA. The polypeptide is Large ribosomal subunit protein uL15 (Psychrobacter cryohalolentis (strain ATCC BAA-1226 / DSM 17306 / VKM B-2378 / K5)).